Here is a 56-residue protein sequence, read N- to C-terminus: Large ribosomal subunit protein bL32 (56 aa).

Positions 1 to 37 are disordered; that stretch reads MAVQQNKKSRSRRDMRRSHDALTTAAVSVDKTTGETH. Residues 7–16 are compositionally biased toward basic residues; it reads KKSRSRRDMR.

The protein belongs to the bacterial ribosomal protein bL32 family.

The protein is Large ribosomal subunit protein bL32 of Haemophilus ducreyi (strain 35000HP / ATCC 700724).